A 31-amino-acid chain; its full sequence is Cytochrome b6-f complex subunit 6 (31 aa).

Residues leucine 4 to glycine 24 form a helical membrane-spanning segment.

Belongs to the PetL family. The 4 large subunits of the cytochrome b6-f complex are cytochrome b6, subunit IV (17 kDa polypeptide, PetD), cytochrome f and the Rieske protein, while the 4 small subunits are PetG, PetL, PetM and PetN. The complex functions as a dimer.

The protein localises to the plastid. The protein resides in the chloroplast thylakoid membrane. In terms of biological role, component of the cytochrome b6-f complex, which mediates electron transfer between photosystem II (PSII) and photosystem I (PSI), cyclic electron flow around PSI, and state transitions. PetL is important for photoautotrophic growth as well as for electron transfer efficiency and stability of the cytochrome b6-f complex. The sequence is that of Cytochrome b6-f complex subunit 6 from Triticum aestivum (Wheat).